A 275-amino-acid polypeptide reads, in one-letter code: Shikimate dehydrogenase (NADP(+)) (275 aa).

Residues 19–21 (SIS) and Thr66 each bind shikimate. The Proton acceptor role is filled by Lys70. Residues Asn91 and Asp106 each coordinate shikimate. NADP(+)-binding positions include 129–133 (GAGGA), 153–158 (NRTYGR), and Ile219. Tyr221 is a binding site for shikimate. Gly242 lines the NADP(+) pocket.

It belongs to the shikimate dehydrogenase family. In terms of assembly, homodimer.

The catalysed reaction is shikimate + NADP(+) = 3-dehydroshikimate + NADPH + H(+). It participates in metabolic intermediate biosynthesis; chorismate biosynthesis; chorismate from D-erythrose 4-phosphate and phosphoenolpyruvate: step 4/7. Involved in the biosynthesis of the chorismate, which leads to the biosynthesis of aromatic amino acids. Catalyzes the reversible NADPH linked reduction of 3-dehydroshikimate (DHSA) to yield shikimate (SA). The sequence is that of Shikimate dehydrogenase (NADP(+)) from Dictyoglomus thermophilum (strain ATCC 35947 / DSM 3960 / H-6-12).